We begin with the raw amino-acid sequence, 190 residues long: Adenine phosphoribosyltransferase (190 aa).

Belongs to the purine/pyrimidine phosphoribosyltransferase family. Homodimer.

The protein resides in the cytoplasm. It catalyses the reaction AMP + diphosphate = 5-phospho-alpha-D-ribose 1-diphosphate + adenine. Its pathway is purine metabolism; AMP biosynthesis via salvage pathway; AMP from adenine: step 1/1. Its function is as follows. Catalyzes a salvage reaction resulting in the formation of AMP, that is energically less costly than de novo synthesis. The sequence is that of Adenine phosphoribosyltransferase from Cupriavidus pinatubonensis (strain JMP 134 / LMG 1197) (Cupriavidus necator (strain JMP 134)).